The primary structure comprises 151 residues: 3-dehydroquinate dehydratase 1 (151 aa).

Tyrosine 23 acts as the Proton acceptor in catalysis. Residues asparagine 75, histidine 81, and aspartate 88 each coordinate substrate. Histidine 101 acts as the Proton donor in catalysis. Substrate-binding positions include 102 to 103 (LS) and arginine 112.

Belongs to the type-II 3-dehydroquinase family. As to quaternary structure, homododecamer.

It carries out the reaction 3-dehydroquinate = 3-dehydroshikimate + H2O. Its pathway is metabolic intermediate biosynthesis; chorismate biosynthesis; chorismate from D-erythrose 4-phosphate and phosphoenolpyruvate: step 3/7. In terms of biological role, catalyzes a trans-dehydration via an enolate intermediate. This chain is 3-dehydroquinate dehydratase 1 (aroQ1), found in Pseudomonas putida (strain ATCC 47054 / DSM 6125 / CFBP 8728 / NCIMB 11950 / KT2440).